The primary structure comprises 1604 residues: E3 ubiquitin-protein ligase HECW1 (1604 aa).

The C2 domain occupies 182 to 318 (SAAPIFKGIG…LERHAIGDRV (137 aa)). Disordered stretches follow at residues 350 to 539 (DEEI…CSLP), 572 to 604 (PSAQRGSTTEEEDGLEEESTLKESSEKDGLSEV), 642 to 667 (GIGAGQDGEAHPSTGSESDSSPQQGA), and 727 to 826 (STVF…TIDE). Over residues 362–380 (SAETQDSIMNSMVGNSNGE) the composition is skewed to polar residues. The segment covering 387–396 (EFCKDAKPES) has biased composition (basic and acidic residues). Residues 398–412 (SEGNGVNSSENQNQE) show a composition bias toward polar residues. Acidic residues-rich tracts occupy residues 435–444 (APEEPGELQD) and 458–469 (EVAEGLPLDEDS). Residues 494-505 (GAREEEMQKGKD) are compositionally biased toward basic and acidic residues. A compositionally biased stretch (acidic residues) spans 580–589 (TEEEDGLEEE). Residues 590 to 601 (STLKESSEKDGL) are compositionally biased toward basic and acidic residues. Composition is skewed to polar residues over residues 654 to 667 (STGSESDSSPQQGA), 748 to 762 (DSVQSPELDPESTNG), and 803 to 812 (HNSQPISQLP). A WW 1 domain is found at 826–859 (EPLPPNWEARIDSHGRVFYVDHINRTTTWQRPSM). Position 871 is a phosphoserine (S871). Positions 871 to 898 (SVHQMEQLNRRYQNIQRTMATERAEEDS) form a coiled coil. Positions 890-936 (ATERAEEDSGNQNSEQIPDGGGGGGGGSDSEAESSQSSLDLRREGSL) are disordered. Gly residues predominate over residues 908–917 (DGGGGGGGGS). Residues S935 and S937 each carry the phosphoserine modification. The WW 2 domain maps to 1016–1049 (LELPRGWEIKTDHQGKSFFVDHNSRATTFIDPRI). The region spanning 1269–1604 (SRKELQRNKL…VEETSTFGLE (336 aa)) is the HECT domain. The active-site Glycyl thioester intermediate is the C1572.

In terms of assembly, interacts with DVL1 and SSR3. Predominantly expressed in neurons of the spinal cord.

The protein resides in the cytoplasm. It carries out the reaction S-ubiquitinyl-[E2 ubiquitin-conjugating enzyme]-L-cysteine + [acceptor protein]-L-lysine = [E2 ubiquitin-conjugating enzyme]-L-cysteine + N(6)-ubiquitinyl-[acceptor protein]-L-lysine.. It participates in protein modification; protein ubiquitination. E3 ubiquitin-protein ligase that mediates ubiquitination and subsequent degradation of DVL1. The chain is E3 ubiquitin-protein ligase HECW1 (Hecw1) from Mus musculus (Mouse).